The following is a 555-amino-acid chain: Solute carrier family 22 member 2 (555 aa).

At methionine 1–glutamine 21 the chain is on the cytoplasmic side. Residues methionine 22–phenylalanine 42 form a helical membrane-spanning segment. At leucine 43–aspartate 150 the chain is on the extracellular side. Asparagine 72 carries an N-linked (GlcNAc...) asparagine glycan. Residues leucine 151–alanine 171 form a helical membrane-spanning segment. Topologically, residues aspartate 172–lysine 177 are cytoplasmic. The chain crosses the membrane as a helical span at residues leucine 178–proline 198. Topologically, residues threonine 199 to glutamine 210 are extracellular. Residues glycine 211–arginine 231 form a helical membrane-spanning segment. At arginine 232–glycine 238 the chain is on the cytoplasmic side. Residues isoleucine 239–leucine 259 traverse the membrane as a helical segment. Residues proline 260–arginine 263 lie on the Extracellular side of the membrane. The chain crosses the membrane as a helical span at residues tryptophan 264 to proline 284. The Proline-rich sequence motif lies at proline 284–arginine 288. Residues glutamate 285 to threonine 348 lie on the Cytoplasmic side of the membrane. The helical transmembrane segment at methionine 349 to methionine 369 threads the bilayer. At glycine 370–asparagine 375 the chain is on the extracellular side. Residues isoleucine 376 to valine 396 form a helical membrane-spanning segment. Topologically, residues threonine 397–arginine 404 are cytoplasmic. Residues tyrosine 405–proline 425 form a helical membrane-spanning segment. The Extracellular segment spans residues glycine 426–lysine 432. Residues isoleucine 433–valine 453 traverse the membrane as a helical segment. Topologically, residues asparagine 454–asparagine 464 are cytoplasmic. Residues leucine 465–valine 485 traverse the membrane as a helical segment. Topologically, residues tyrosine 486 to glutamate 494 are extracellular. A helical transmembrane segment spans residues leucine 495 to proline 515. At glutamate 516 to asparagine 555 the chain is on the cytoplasmic side.

Belongs to the major facilitator (TC 2.A.1) superfamily. Organic cation transporter (TC 2.A.1.19) family. Post-translationally, tyrosine phosphorylated.

The protein resides in the basolateral cell membrane. The protein localises to the basal cell membrane. Its subcellular location is the apical cell membrane. It carries out the reaction (R)-noradrenaline(out) = (R)-noradrenaline(in). The enzyme catalyses (R)-adrenaline(out) = (R)-adrenaline(in). It catalyses the reaction serotonin(out) = serotonin(in). The catalysed reaction is dopamine(out) = dopamine(in). It carries out the reaction histamine(out) = histamine(in). The enzyme catalyses thiamine(in) = thiamine(out). It catalyses the reaction creatinine(in) = creatinine(out). The catalysed reaction is 1-methylnicotinamide(out) = 1-methylnicotinamide(in). It carries out the reaction guanidine(out) = guanidine(in). The enzyme catalyses choline(out) = choline(in). It catalyses the reaction agmatine(out) = agmatine(in). The catalysed reaction is putrescine(out) = putrescine(in). It carries out the reaction spermidine(in) = spermidine(out). The enzyme catalyses tyramine(in) = tyramine(out). It catalyses the reaction L-histidyl-L-proline diketopiperazine(in) = L-histidyl-L-proline diketopiperazine(out). The catalysed reaction is (R)-salsolinol(in) = (R)-salsolinol(out). It carries out the reaction N-methyl-(R)-salsolinol(in) = N-methyl-(R)-salsolinol(out). The enzyme catalyses acetylcholine(in) = acetylcholine(out). It catalyses the reaction prostaglandin F2alpha(out) = prostaglandin F2alpha(in). The catalysed reaction is prostaglandin E2(out) = prostaglandin E2(in). Its activity is regulated as follows. Tyrosine phosphorylation of the transporter leads to activation of the transport activity. Inhibited by cGMP, most likely through a cGMP-binding protein that interacts with OCT2. Functionally, electrogenic voltage-dependent transporter that mediates the transport of a variety of organic cations such as endogenous bioactive amines, cationic drugs and xenobiotics. Functions as a Na(+)-independent, bidirectional uniporter. Cation cellular uptake or release is driven by the electrochemical potential, i.e. membrane potential and concentration gradient. However, may also engage electroneutral cation exchange when saturating concentrations of cation substrates are reached. Predominantly expressed at the basolateral membrane of hepatocytes and proximal tubules and involved in the uptake and disposition of cationic compounds by hepatic and renal clearance from the blood flow. Implicated in monoamine neurotransmitters uptake such as histamine, dopamine, adrenaline/epinephrine, noradrenaline/norepinephrine, serotonin and tyramine, thereby supporting a physiological role in the central nervous system by regulating interstitial concentrations of neurotransmitters. Also capable of transporting dopaminergic neuromodulators cyclo(his-pro), salsolinol and N-methyl-salsolinol, thereby involved in the maintenance of dopaminergic cell integrity in the central nervous system. Mediates the bidirectional transport of acetylcholine (ACh) at the apical membrane of ciliated cell in airway epithelium, thereby playing a role in luminal release of ACh from bronchial epithelium. Also transports guanidine and endogenous monoamines such as vitamin B1/thiamine, creatinine and N-1-methylnicotinamide (NMN). Mediates the uptake and efflux of quaternary ammonium compound choline. Mediates the bidirectional transport of polyamine agmatine and the uptake of polyamines putrescine and spermidine. Able to transport non-amine endogenous compounds such as prostaglandin E2 (PGE2) and prostaglandin F2-alpha (PGF2-alpha). Also involved in the uptake of xenobiotic 4-(4-(dimethylamino)styryl)-N-methylpyridinium (ASP). May contribute to regulate the transport of organic compounds in testis across the blood-testis-barrier. This Pongo abelii (Sumatran orangutan) protein is Solute carrier family 22 member 2 (SLC22A2).